The primary structure comprises 554 residues: Dihydroxy-acid dehydratase (554 aa).

Residue Asp78 coordinates Mg(2+). Cys119 serves as a coordination point for [2Fe-2S] cluster. 2 residues coordinate Mg(2+): Asp120 and Lys121. An N6-carboxylysine modification is found at Lys121. Cys192 is a [2Fe-2S] cluster binding site. Position 443 (Glu443) interacts with Mg(2+). Ser469 functions as the Proton acceptor in the catalytic mechanism.

Belongs to the IlvD/Edd family. As to quaternary structure, homodimer. It depends on [2Fe-2S] cluster as a cofactor. Requires Mg(2+) as cofactor.

The catalysed reaction is (2R)-2,3-dihydroxy-3-methylbutanoate = 3-methyl-2-oxobutanoate + H2O. The enzyme catalyses (2R,3R)-2,3-dihydroxy-3-methylpentanoate = (S)-3-methyl-2-oxopentanoate + H2O. It functions in the pathway amino-acid biosynthesis; L-isoleucine biosynthesis; L-isoleucine from 2-oxobutanoate: step 3/4. It participates in amino-acid biosynthesis; L-valine biosynthesis; L-valine from pyruvate: step 3/4. Functionally, functions in the biosynthesis of branched-chain amino acids. Catalyzes the dehydration of (2R,3R)-2,3-dihydroxy-3-methylpentanoate (2,3-dihydroxy-3-methylvalerate) into 2-oxo-3-methylpentanoate (2-oxo-3-methylvalerate) and of (2R)-2,3-dihydroxy-3-methylbutanoate (2,3-dihydroxyisovalerate) into 2-oxo-3-methylbutanoate (2-oxoisovalerate), the penultimate precursor to L-isoleucine and L-valine, respectively. The sequence is that of Dihydroxy-acid dehydratase from Clostridium novyi (strain NT).